A 58-amino-acid polypeptide reads, in one-letter code: Large ribosomal subunit protein uL30 (58 aa).

This sequence belongs to the universal ribosomal protein uL30 family. In terms of assembly, part of the 50S ribosomal subunit.

This chain is Large ribosomal subunit protein uL30, found in Buchnera aphidicola subsp. Baizongia pistaciae (strain Bp).